A 467-amino-acid chain; its full sequence is Zinc finger and BTB domain-containing protein 43 (467 aa).

Residue Met-1 is modified to N-acetylmethionine. Residues 33-97 form the BTB domain; it reads CDVSIVVQGH…SYTGRLVMPA (65 aa). Disordered stretches follow at residues 134–153 and 162–227; these read LNHG…GLVE and HTDF…EFHY. The segment covering 140–149 has biased composition (polar residues); that stretch reads HQSPSSSNYN. Composition is skewed to basic and acidic residues over residues 164–174 and 182–194; these read DFPKAQELRDG and KDEL…EHEY. Glycyl lysine isopeptide (Lys-Gly) (interchain with G-Cter in SUMO2) cross-links involve residues Lys-182, Lys-247, Lys-297, and Lys-358. The segment at 373-394 adopts a C2H2-type 1; atypical zinc-finger fold; sequence YPCQCGKSFTHKSQRDRHMSMH. The C2H2-type 2 zinc-finger motif lies at 400–422; the sequence is YGCSVCGKKFKMKHHLVGHMKIH. Position 423 is a phosphothreonine (Thr-423). The C2H2-type 3; atypical zinc-finger motif lies at 428–450; sequence YECNICAKRFMWRDSFHRHVTSC. Lys-458 participates in a covalent cross-link: Glycyl lysine isopeptide (Lys-Gly) (interchain with G-Cter in SUMO2).

Belongs to the krueppel C2H2-type zinc-finger protein family. As to quaternary structure, interacts with BDP1.

The protein localises to the nucleus. May be involved in transcriptional regulation. This chain is Zinc finger and BTB domain-containing protein 43 (Zbtb43), found in Mus musculus (Mouse).